The chain runs to 354 residues: Uroporphyrinogen decarboxylase (354 aa).

Substrate-binding positions include R27–R31, F46, D77, Y154, S209, and H327.

It belongs to the uroporphyrinogen decarboxylase family. In terms of assembly, homodimer.

Its subcellular location is the cytoplasm. It carries out the reaction uroporphyrinogen III + 4 H(+) = coproporphyrinogen III + 4 CO2. It participates in porphyrin-containing compound metabolism; protoporphyrin-IX biosynthesis; coproporphyrinogen-III from 5-aminolevulinate: step 4/4. Its function is as follows. Catalyzes the decarboxylation of four acetate groups of uroporphyrinogen-III to yield coproporphyrinogen-III. The chain is Uroporphyrinogen decarboxylase from Shewanella oneidensis (strain ATCC 700550 / JCM 31522 / CIP 106686 / LMG 19005 / NCIMB 14063 / MR-1).